The primary structure comprises 465 residues: Tubulin gamma chain (465 aa).

144-150 contacts GTP; the sequence is AGGTGSG.

This sequence belongs to the tubulin family.

The protein resides in the cytoplasm. The protein localises to the cytoskeleton. It localises to the microtubule organizing center. It is found in the spindle pole body. Functionally, tubulin is the major constituent of microtubules. The gamma chain is found at microtubule organizing centers (MTOC) such as the spindle poles or the centrosome, suggesting that it is involved in the minus-end nucleation of microtubule assembly. This Candida glabrata (strain ATCC 2001 / BCRC 20586 / JCM 3761 / NBRC 0622 / NRRL Y-65 / CBS 138) (Yeast) protein is Tubulin gamma chain (TUB4).